The chain runs to 180 residues: Large ribosomal subunit protein uL5 (180 aa).

This sequence belongs to the universal ribosomal protein uL5 family. In terms of assembly, part of the 50S ribosomal subunit; part of the 5S rRNA/L5/L18/L25 subcomplex. Contacts the 5S rRNA and the P site tRNA. Forms a bridge to the 30S subunit in the 70S ribosome.

Functionally, this is one of the proteins that bind and probably mediate the attachment of the 5S RNA into the large ribosomal subunit, where it forms part of the central protuberance. In the 70S ribosome it contacts protein S13 of the 30S subunit (bridge B1b), connecting the 2 subunits; this bridge is implicated in subunit movement. Contacts the P site tRNA; the 5S rRNA and some of its associated proteins might help stabilize positioning of ribosome-bound tRNAs. This Lactiplantibacillus plantarum (strain ATCC BAA-793 / NCIMB 8826 / WCFS1) (Lactobacillus plantarum) protein is Large ribosomal subunit protein uL5.